A 337-amino-acid chain; its full sequence is Putative NAC domain-containing protein 94 (337 aa).

The NAC domain maps to 20-191; sequence VLPGFRFHPT…AWAICRIFKK (172 aa).

The protein localises to the nucleus. This chain is Putative NAC domain-containing protein 94 (ANAC094), found in Arabidopsis thaliana (Mouse-ear cress).